A 963-amino-acid chain; its full sequence is Spliceosome associated factor 3, U4/U6 recycling protein (963 aa).

Residues 1 to 11 (MATAAATSASE) show a composition bias toward low complexity. Disordered regions lie at residues 1 to 36 (MATA…RTRR) and 49 to 86 (KTMG…YEWE). Position 2 is an N-acetylalanine (alanine 2). Residues 2–351 (ATAAATSASE…LVPDLWIRYS (350 aa)) form a mediates interaction with PRPF3 region. 2 positions are modified to phosphoserine: serine 10 and serine 16. Residues 14 to 23 (AESKAGPKAD) are compositionally biased toward basic and acidic residues. Residues 21–46 (KADGEEDEVKAARTRRKVLSRAVAAA) are a coiled coil. The segment covering 57-69 (QQEEGVSESDGDE) has biased composition (acidic residues). A coiled-coil region spans residues 82-110 (EYEWEYDEEEEKNQLEIERLEEQLSINVY). HAT repeat units follow at residues 126–158 (GELT…DEIS), 164–195 (LDRE…YSVG), 201–237 (GGLE…FESA), 242–275 (ARLE…WSED), 324–356 (GDPA…YLDR), 359–391 (KVKD…AMER), 394–430 (VDHQ…YLRR), and 487–520 (NNMQ…LERA). Serine 215 carries the phosphoserine modification. The tract at residues 487-520 (NNMQKARELWDSIMTRGNAKYANMWLEYYNLERA) is required for interaction with USP4. Positions 537-953 (CTSDYPEHVC…AATEAPKMSN (417 aa)) are necessary and sufficient for U6 snRNA binding. Residues 559 to 619 (LEDWDIAVQK…ALKKKKKIRG (61 aa)) are a coiled coil. The tract at residues 600 to 670 (QRKRARAEKK…EVAPGPAGKC (71 aa)) is required for nuclear localization. The Nuclear localization signal motif lies at 601-608 (RKRARAEK). Basic and acidic residues predominate over residues 608–619 (KKALKKKKKIRG). Residues 608–712 (KKALKKKKKI…SITVFVSNLP (105 aa)) form a disordered region. Over residues 620–635 (PEKRGADEDDEKEWGD) the composition is skewed to basic residues. Residues 644-657 (RRRVENSIPAAGET) are compositionally biased toward acidic residues. Serine 650 bears the Phosphoserine mark. Threonine 657 bears the Phosphothreonine mark. A compositionally biased stretch (basic and acidic residues) spans 695–712 (VLHDSSKDSITVFVSNLP). The RRM 1 domain occupies 704 to 782 (ITVFVSNLPY…RPMFVSPCVD (79 aa)). A phosphoserine mark is found at serine 769, serine 795, and serine 852. In terms of domain architecture, RRM 2 spans 801 to 878 (HKLFISGLPF…NVIKVAISNP (78 aa)). The segment covering 900-909 (PQTYGARGKG) has biased composition (basic and acidic residues). At arginine 906 the chain carries Omega-N-methylarginine.

Component of the 7SK snRNP complex at least composed of P-TEFb (composed of CDK9 and CCNT1/cyclin-T1), HEXIM1, HEXIM2, BCDIN3, SART3 proteins and 7SK and U6 snRNAs. Interacts with AGO1 and AGO2. Interacts with PRPF3 and USP4; the interaction with PRPF3 is direct and recruits USP4 to its substrate PRPF3. Interacts with USP15; the interaction is direct.

Its subcellular location is the nucleus. It localises to the nucleoplasm. The protein resides in the cajal body. It is found in the nucleus speckle. The protein localises to the cytoplasm. Its function is as follows. U6 snRNP-binding protein that functions as a recycling factor of the splicing machinery. Promotes the initial reassembly of U4 and U6 snRNPs following their ejection from the spliceosome during its maturation. Also binds U6atac snRNPs and may function as a recycling factor for U4atac/U6atac spliceosomal snRNP, an initial step in the assembly of U12-type spliceosomal complex. The U12-type spliceosomal complex plays a role in the splicing of introns with non-canonical splice sites. May also function as a substrate-targeting factor for deubiquitinases like USP4 and USP15. Recruits USP4 to ubiquitinated PRPF3 within the U4/U5/U6 tri-snRNP complex, promoting PRPF3 deubiquitination and thereby regulating the spliceosome U4/U5/U6 tri-snRNP spliceosomal complex disassembly. May also recruit the deubiquitinase USP15 to histone H2B and mediate histone deubiquitination, thereby regulating gene expression and/or DNA repair. May play a role in hematopoiesis probably through transcription regulation of specific genes including MYC. This Pongo abelii (Sumatran orangutan) protein is Spliceosome associated factor 3, U4/U6 recycling protein.